We begin with the raw amino-acid sequence, 185 residues long: ATP synthase subunit b 2 (185 aa).

The interval 1 to 26 (MAQGHGDAKGTTAHTEAGGGHKAPFP) is disordered. The chain crosses the membrane as a helical span at residues 37–57 (LVSLAIAFVALYLIVSKIALP).

The protein belongs to the ATPase B chain family. In terms of assembly, F-type ATPases have 2 components, F(1) - the catalytic core - and F(0) - the membrane proton channel. F(1) has five subunits: alpha(3), beta(3), gamma(1), delta(1), epsilon(1). F(0) has three main subunits: a(1), b(2) and c(10-14). The alpha and beta chains form an alternating ring which encloses part of the gamma chain. F(1) is attached to F(0) by a central stalk formed by the gamma and epsilon chains, while a peripheral stalk is formed by the delta and b chains.

It is found in the cell inner membrane. Functionally, f(1)F(0) ATP synthase produces ATP from ADP in the presence of a proton or sodium gradient. F-type ATPases consist of two structural domains, F(1) containing the extramembraneous catalytic core and F(0) containing the membrane proton channel, linked together by a central stalk and a peripheral stalk. During catalysis, ATP synthesis in the catalytic domain of F(1) is coupled via a rotary mechanism of the central stalk subunits to proton translocation. Component of the F(0) channel, it forms part of the peripheral stalk, linking F(1) to F(0). The b'-subunit is a diverged and duplicated form of b found in plants and photosynthetic bacteria. The chain is ATP synthase subunit b 2 (atpF2) from Rhodopseudomonas palustris (strain ATCC BAA-98 / CGA009).